The sequence spans 85 residues: UPF0386 protein Plav_1374 (85 aa).

Belongs to the UPF0386 family.

The polypeptide is UPF0386 protein Plav_1374 (Parvibaculum lavamentivorans (strain DS-1 / DSM 13023 / NCIMB 13966)).